A 407-amino-acid chain; its full sequence is Putative F-box protein At2g16220 (407 aa).

An F-box domain is found at 1–45 (MNSHFLTNDLILEVLSRLPLKSVARFHCVSKRWASMFGSPYFKEL). A disordered region spans residues 385 to 407 (PPSVQPEYDESDSESEEDREIII). A compositionally biased stretch (acidic residues) spans 391 to 407 (EYDESDSESEEDREIII).

The chain is Putative F-box protein At2g16220 from Arabidopsis thaliana (Mouse-ear cress).